A 405-amino-acid chain; its full sequence is Pre-mRNA-splicing factor cwc-24 (405 aa).

2 disordered regions span residues 1–114 and 162–184; these read MADT…NTIY and TKKK…DGTY. The segment covering 15–29 has biased composition (low complexity); it reads EPTTATPTAPIAPVA. Basic residues predominate over residues 31–46; it reads FKKRGAKGKANLRKRP. Residues 56–70 are compositionally biased toward acidic residues; that stretch reads SDDDSSDFESSEDEA. Positions 74–83 are enriched in basic residues; the sequence is RIKRRKKNHH. A C3H1-type zinc finger spans residues 221-249; it reads DMAPDVCKDYKQTGFCGFGDNCKFLHARE. Residues 310-349 form an RING-type zinc finger; sequence CIICRGPYSNSPVVTRCGHYFCEACALKRYRKDPSCAACG. Over residues 370–386 the composition is skewed to basic and acidic residues; sequence KARAERLRREARERGEE. Positions 370 to 405 are disordered; it reads KARAERLRREARERGEEVSEEEDEGEDEGEGAEGSD. Positions 387–405 are enriched in acidic residues; it reads VSEEEDEGEDEGEGAEGSD.

This sequence belongs to the CWC24 family. In terms of assembly, associated with the spliceosome.

It is found in the nucleus. Involved in pre-mRNA splicing. This Neurospora crassa (strain ATCC 24698 / 74-OR23-1A / CBS 708.71 / DSM 1257 / FGSC 987) protein is Pre-mRNA-splicing factor cwc-24 (cwc-24).